Here is a 116-residue protein sequence, read N- to C-terminus: Ribosome-binding factor A (116 aa).

This sequence belongs to the RbfA family. Monomer. Binds 30S ribosomal subunits, but not 50S ribosomal subunits or 70S ribosomes.

The protein localises to the cytoplasm. One of several proteins that assist in the late maturation steps of the functional core of the 30S ribosomal subunit. Associates with free 30S ribosomal subunits (but not with 30S subunits that are part of 70S ribosomes or polysomes). Required for efficient processing of 16S rRNA. May interact with the 5'-terminal helix region of 16S rRNA. The chain is Ribosome-binding factor A from Malacoplasma penetrans (strain HF-2) (Mycoplasma penetrans).